The primary structure comprises 351 residues: D-alanine--D-alanine ligase (351 aa).

An ATP-grasp domain is found at 135–344 (KMAFAQAGLP…FAELVDQLIQ (210 aa)). 171-226 (EQRLGYPCFVKPANLGSSVGIAKVRSRSELEKALDSAASYDRRIVIETGVKAREVE) lines the ATP pocket. Residues aspartate 297, glutamate 311, and asparagine 313 each coordinate Mg(2+).

Belongs to the D-alanine--D-alanine ligase family. It depends on Mg(2+) as a cofactor. The cofactor is Mn(2+).

Its subcellular location is the cytoplasm. The enzyme catalyses 2 D-alanine + ATP = D-alanyl-D-alanine + ADP + phosphate + H(+). It participates in cell wall biogenesis; peptidoglycan biosynthesis. Functionally, cell wall formation. The protein is D-alanine--D-alanine ligase of Rippkaea orientalis (strain PCC 8801 / RF-1) (Cyanothece sp. (strain PCC 8801)).